The sequence spans 227 residues: UPF0758 protein Spro_4842 (227 aa).

In terms of domain architecture, MPN spans Ala105–Leu227. Positions 176, 178, and 189 each coordinate Zn(2+). A JAMM motif motif is present at residues His176 to Asp189.

Belongs to the UPF0758 family. YicR subfamily.

In Serratia proteamaculans (strain 568), this protein is UPF0758 protein Spro_4842.